Reading from the N-terminus, the 122-residue chain is Large ribosomal subunit protein uL14c (122 aa).

It belongs to the universal ribosomal protein uL14 family. As to quaternary structure, part of the 50S ribosomal subunit.

The protein localises to the plastid. Its subcellular location is the chloroplast. In terms of biological role, binds to 23S rRNA. This Capsella bursa-pastoris (Shepherd's purse) protein is Large ribosomal subunit protein uL14c.